The primary structure comprises 314 residues: 3'-5' exoribonuclease YhaM (314 aa).

One can recognise an HD domain in the interval 163–279 (HVVSMLDLAK…LHYIDNLDAK (117 aa)).

This sequence belongs to the YhaM family.

Functionally, shows a 3'-5' exoribonuclease activity. The sequence is that of 3'-5' exoribonuclease YhaM from Bacillus anthracis (strain CDC 684 / NRRL 3495).